We begin with the raw amino-acid sequence, 283 residues long: NAD kinase (283 aa).

Residue Asp-66 is the Proton acceptor of the active site. NAD(+) is bound by residues 66-67 (DG), Arg-71, 137-138 (ND), His-165, Asp-167, and 178-183 (TGYSMS).

The protein belongs to the NAD kinase family. A divalent metal cation is required as a cofactor.

Its subcellular location is the cytoplasm. It carries out the reaction NAD(+) + ATP = ADP + NADP(+) + H(+). Involved in the regulation of the intracellular balance of NAD and NADP, and is a key enzyme in the biosynthesis of NADP. Catalyzes specifically the phosphorylation on 2'-hydroxyl of the adenosine moiety of NAD to yield NADP. This is NAD kinase from Agathobacter rectalis (strain ATCC 33656 / DSM 3377 / JCM 17463 / KCTC 5835 / VPI 0990) (Eubacterium rectale).